A 330-amino-acid polypeptide reads, in one-letter code: UPF0324 membrane protein PG_2004 (330 aa).

9 helical membrane passes run 13–31, 36–58, 71–93, 97–114, 126–148, 158–180, 248–270, 285–307, and 312–329; these read IAYPAIIVFLILTLLGSLV, PFTSWLTPPVALLMGLAYALIFG, VLLQYSVVGLGFGMNLGESLASG, MMFTIISVFGTLLLGWFI, SALISAGTAICGGSAIAAVGPIL, ALGTVFLLNAVALFIFPSIGHWL, VPLFILFFIGAIILNTYLLEAYF, LTLSLFFIGASLTKEVIASVGVR, and GLFLWILISVGSLAFILL.

Belongs to the UPF0324 family.

The protein localises to the cell membrane. This Porphyromonas gingivalis (strain ATCC BAA-308 / W83) protein is UPF0324 membrane protein PG_2004.